The sequence spans 407 residues: Argininosuccinate synthase (407 aa).

ATP contacts are provided by residues 12-20 and A39; that span reads AFSGGLDTS. 2 residues coordinate L-citrulline: Y90 and S95. G120 contributes to the ATP binding site. Positions 122, 126, and 127 each coordinate L-aspartate. N126 is an L-citrulline binding site. Positions 130, 181, 190, 266, and 278 each coordinate L-citrulline.

Belongs to the argininosuccinate synthase family. Type 1 subfamily. As to quaternary structure, homotetramer.

It is found in the cytoplasm. The enzyme catalyses L-citrulline + L-aspartate + ATP = 2-(N(omega)-L-arginino)succinate + AMP + diphosphate + H(+). The protein operates within amino-acid biosynthesis; L-arginine biosynthesis; L-arginine from L-ornithine and carbamoyl phosphate: step 2/3. This Nitrosospira multiformis (strain ATCC 25196 / NCIMB 11849 / C 71) protein is Argininosuccinate synthase.